The primary structure comprises 175 residues: uncharacterized protein (175 aa).

The DNL-type zinc-finger motif lies at 71 to 166 (QPKPTYNVSF…KPPQFKIRPA (96 aa)). Cys-82, Cys-85, Cys-107, and Cys-110 together coordinate Zn(2+).

This is an uncharacterized protein from Schizosaccharomyces pombe (strain 972 / ATCC 24843) (Fission yeast).